Here is an 80-residue protein sequence, read N- to C-terminus: ATP synthase subunit c (80 aa).

A run of 2 helical transmembrane segments spans residues 11 to 31 (IAAA…IGIL) and 53 to 73 (FFIV…LGLY).

It belongs to the ATPase C chain family. F-type ATPases have 2 components, F(1) - the catalytic core - and F(0) - the membrane proton channel. F(1) has five subunits: alpha(3), beta(3), gamma(1), delta(1), epsilon(1). F(0) has three main subunits: a(1), b(2) and c(10-14). The alpha and beta chains form an alternating ring which encloses part of the gamma chain. F(1) is attached to F(0) by a central stalk formed by the gamma and epsilon chains, while a peripheral stalk is formed by the delta and b chains.

The protein resides in the cell inner membrane. F(1)F(0) ATP synthase produces ATP from ADP in the presence of a proton or sodium gradient. F-type ATPases consist of two structural domains, F(1) containing the extramembraneous catalytic core and F(0) containing the membrane proton channel, linked together by a central stalk and a peripheral stalk. During catalysis, ATP synthesis in the catalytic domain of F(1) is coupled via a rotary mechanism of the central stalk subunits to proton translocation. Its function is as follows. Key component of the F(0) channel; it plays a direct role in translocation across the membrane. A homomeric c-ring of between 10-14 subunits forms the central stalk rotor element with the F(1) delta and epsilon subunits. The chain is ATP synthase subunit c from Aeromonas hydrophila subsp. hydrophila (strain ATCC 7966 / DSM 30187 / BCRC 13018 / CCUG 14551 / JCM 1027 / KCTC 2358 / NCIMB 9240 / NCTC 8049).